Reading from the N-terminus, the 451-residue chain is Chromosomal replication initiator protein DnaA 2 (451 aa).

Residues 1 to 68 (MQAWEEFLKA…QQKFINGNNK (68 aa)) are domain I, interacts with DnaA modulators. A domain II region spans residues 68 to 104 (KRIKIHLSVANTPQRAKKTKTANKEKDFKAPFELTFD). Residues 105–326 (ELDPLCLFPY…KGLEALVLRL (222 aa)) are domain III, AAA+ region. Gly156, Gly158, Lys159, and Thr160 together coordinate ATP. The interval 327–451 (HLDAKHSITA…CHIILKKLQG (125 aa)) is domain IV, binds dsDNA.

Belongs to the DnaA family. Oligomerizes as a right-handed, spiral filament on DNA at oriC.

The protein localises to the cytoplasm. Plays an essential role in the initiation and regulation of chromosomal replication. ATP-DnaA binds to the origin of replication (oriC) to initiate formation of the DNA replication initiation complex once per cell cycle. Binds the DnaA box (a 9 base pair repeat at the origin) and separates the double-stranded (ds)DNA. Forms a right-handed helical filament on oriC DNA; dsDNA binds to the exterior of the filament while single-stranded (ss)DNA is stabiized in the filament's interior. The ATP-DnaA-oriC complex binds and stabilizes one strand of the AT-rich DNA unwinding element (DUE), permitting loading of DNA polymerase. After initiation quickly degrades to an ADP-DnaA complex that is not apt for DNA replication. Binds acidic phospholipids. In Protochlamydia amoebophila (strain UWE25), this protein is Chromosomal replication initiator protein DnaA 2.